Reading from the N-terminus, the 240-residue chain is Pyridoxine 5'-phosphate synthase (240 aa).

Asn6 is a 3-amino-2-oxopropyl phosphate binding site. Asp8–His9 serves as a coordination point for 1-deoxy-D-xylulose 5-phosphate. Arg17 lines the 3-amino-2-oxopropyl phosphate pocket. The Proton acceptor role is filled by His42. Arg44 and His49 together coordinate 1-deoxy-D-xylulose 5-phosphate. Glu69 acts as the Proton acceptor in catalysis. Residue Thr99 participates in 1-deoxy-D-xylulose 5-phosphate binding. His190 functions as the Proton donor in the catalytic mechanism. Residues Gly191 and Gly212 to His213 each bind 3-amino-2-oxopropyl phosphate.

Belongs to the PNP synthase family. As to quaternary structure, homooctamer; tetramer of dimers.

The protein localises to the cytoplasm. The catalysed reaction is 3-amino-2-oxopropyl phosphate + 1-deoxy-D-xylulose 5-phosphate = pyridoxine 5'-phosphate + phosphate + 2 H2O + H(+). It functions in the pathway cofactor biosynthesis; pyridoxine 5'-phosphate biosynthesis; pyridoxine 5'-phosphate from D-erythrose 4-phosphate: step 5/5. In terms of biological role, catalyzes the complicated ring closure reaction between the two acyclic compounds 1-deoxy-D-xylulose-5-phosphate (DXP) and 3-amino-2-oxopropyl phosphate (1-amino-acetone-3-phosphate or AAP) to form pyridoxine 5'-phosphate (PNP) and inorganic phosphate. The chain is Pyridoxine 5'-phosphate synthase from Pseudomonas entomophila (strain L48).